The sequence spans 490 residues: Betaine aldehyde dehydrogenase (490 aa).

3 residues coordinate K(+): Ser26, Ile27, and Asp93. 150-152 (GAW) serves as a coordination point for NAD(+). Residue Lys162 is the Charge relay system of the active site. Residue 176-179 (KPSE) participates in NAD(+) binding. A K(+)-binding site is contributed by Val180. Position 230–233 (230–233 (GTVT)) interacts with NAD(+). Residue Leu246 coordinates K(+). The active-site Proton acceptor is the Glu252. NAD(+) is bound by residues Gly254, Cys286, and Glu387. Cys286 acts as the Nucleophile in catalysis. Cysteine sulfenic acid (-SOH) is present on Cys286. Residues Lys457 and Gly460 each contribute to the K(+) site. Glu464 (charge relay system) is an active-site residue.

Belongs to the aldehyde dehydrogenase family. As to quaternary structure, dimer of dimers. Requires K(+) as cofactor.

It carries out the reaction betaine aldehyde + NAD(+) + H2O = glycine betaine + NADH + 2 H(+). It participates in amine and polyamine biosynthesis; betaine biosynthesis via choline pathway; betaine from betaine aldehyde: step 1/1. Its function is as follows. Involved in the biosynthesis of the osmoprotectant glycine betaine. Catalyzes the irreversible oxidation of betaine aldehyde to the corresponding acid. The chain is Betaine aldehyde dehydrogenase from Ectopseudomonas mendocina (strain ymp) (Pseudomonas mendocina).